A 429-amino-acid chain; its full sequence is GDP-fucose protein O-fucosyltransferase 2 (429 aa).

A signal peptide spans 1–21; sequence MATLSFVFLLLGAVSWPPASA. A GDP-beta-L-fucose-binding site is contributed by 53–57; sequence PEGFN. The active-site Proton acceptor is Glu-54. Cys-161 and Cys-192 are oxidised to a cystine. 3 N-linked (GlcNAc...) asparagine glycosylation sites follow: Asn-189, Asn-209, and Asn-259. Residues 292-294, Asp-371, and 388-389 contribute to the GDP-beta-L-fucose site; these read HLR and TF. Residues Cys-412 and Cys-419 are joined by a disulfide bond.

The protein belongs to the glycosyltransferase 68 family.

The protein resides in the endoplasmic reticulum. It is found in the golgi apparatus. It catalyses the reaction L-seryl-[protein] + GDP-beta-L-fucose = 3-O-(alpha-L-fucosyl)-L-seryl-[protein] + GDP + H(+). The enzyme catalyses L-threonyl-[protein] + GDP-beta-L-fucose = 3-O-(alpha-L-fucosyl)-L-threonyl-[protein] + GDP + H(+). It functions in the pathway protein modification; protein glycosylation. Catalyzes the reaction that attaches fucose through an O-glycosidic linkage to a conserved serine or threonine residue in the consensus sequence C1-X-X-S/T-C2 of thrombospondin type I repeats (TSRs) where C1 and C2 are the first and second cysteines of the repeat, respectively. O-fucosylates members of several protein families including the ADAMTS, the thrombospondin (TSP) and spondin families. Required for the proper secretion of ADAMTS family members such as ADAMTSL1 and ADAMTS13. The O-fucosylation of TSRs is also required for restricting epithelial to mesenchymal transition (EMT), maintaining the correct patterning of mesoderm and localization of the definite endoderm. This Pan troglodytes (Chimpanzee) protein is GDP-fucose protein O-fucosyltransferase 2 (POFUT2).